Reading from the N-terminus, the 382-residue chain is ATP phosphoribosyltransferase regulatory subunit (382 aa).

Belongs to the class-II aminoacyl-tRNA synthetase family. HisZ subfamily. Heteromultimer composed of HisG and HisZ subunits.

The protein resides in the cytoplasm. The protein operates within amino-acid biosynthesis; L-histidine biosynthesis; L-histidine from 5-phospho-alpha-D-ribose 1-diphosphate: step 1/9. Required for the first step of histidine biosynthesis. May allow the feedback regulation of ATP phosphoribosyltransferase activity by histidine. This Burkholderia pseudomallei (strain 1106a) protein is ATP phosphoribosyltransferase regulatory subunit.